The chain runs to 264 residues: Glutamate 5-kinase (264 aa).

Lys-15 contacts ATP. Positions 55, 142, and 154 each coordinate substrate. ATP contacts are provided by residues 174 to 175 (SD) and 216 to 222 (TGGIATK).

It belongs to the glutamate 5-kinase family.

The protein resides in the cytoplasm. The catalysed reaction is L-glutamate + ATP = L-glutamyl 5-phosphate + ADP. It participates in amino-acid biosynthesis; L-proline biosynthesis; L-glutamate 5-semialdehyde from L-glutamate: step 1/2. Catalyzes the transfer of a phosphate group to glutamate to form L-glutamate 5-phosphate. The protein is Glutamate 5-kinase of Alkaliphilus metalliredigens (strain QYMF).